The chain runs to 156 residues: Succinate dehydrogenase assembly factor 2-A, mitochondrial (156 aa).

Residues 1–24 (MLRQFLVSTAVRRVVVPSMAQTRC) constitute a mitochondrion transit peptide. Positions 35-62 (TPGEIVDYDDPPHIPVPEYPSRPDEPLE) are disordered.

This sequence belongs to the SDHAF2 family. As to quaternary structure, interacts with the flavoprotein subunit within the SDH catalytic dimer.

It localises to the mitochondrion matrix. Functionally, plays an essential role in the assembly of succinate dehydrogenase (SDH), an enzyme complex (also referred to as respiratory complex II) that is a component of both the tricarboxylic acid (TCA) cycle and the mitochondrial electron transport chain, and which couples the oxidation of succinate to fumarate with the reduction of ubiquinone (coenzyme Q) to ubiquinol. Required for flavinylation (covalent attachment of FAD) of the flavoprotein subunit of the SDH catalytic dimer. The sequence is that of Succinate dehydrogenase assembly factor 2-A, mitochondrial from Drosophila ananassae (Fruit fly).